A 1506-amino-acid chain; its full sequence is MEESQNIPPKTQTLNNSENSINNINNNNLTTTTTTTAVGNTNYKNNNRYNNNRYNRNNFNNYNNNNNNNNNNNNMVTSTTSPPTTTTTTTSTTTTATPSSNSNNRRKNYHNNNYNNNNNNNQLSEDTDEVILYTPADISASLKSESAKQQQQQQQQSLPTQEPTQTLNWQQELYKLNPKSKAFVPKPQGSVPFNNTNNNNNNNNNNNNNVPQSPIKDNNRPQRERRERKPKENNTQQPQPQQPQQPQQPQPQPQQQQQSQQQQTVKENNRKKENKLQSKKDIITNNDNIEPIKSKEDISLANKFAKNRAKENLAKTNSINNSNTANSNKIKGKTKFIFNENDEKNSEYTPLAIQMITKIQANIYECMVCFENVGKNAVIWSCSQCFTMFHSSCIKQWSSKSVTTEGKWKCPGCRYNHEVKPEHFQPACFCGKVKDPQYNPYHLAHSCGEVCGKLRAKSNCPHSCTMLCHPGPCLNCSSLGDIKDCYCGKTKYRLLCGEVDKGKVCEGKCEKLLSCGNHRCQQQCHSGSCSPCEVVETQKCYCGKHIDKTKPCGSGSIDTSQSDDDPRFFSCAEKCDRTLDCGNHKCQRTCHKGDCEPCSLVPDRVDRCNCKQTTLEELGVVRTSCLDPIPVCKKVCSTLLACKQHSCTDRCHTGPCGSCKVKVRSICRCGKTTENRQCGVIQQNMSSTSAAAFTCGNVCKILRSCKRHECGVKCCPSTSSSDEAGNHVCTLVCGKQLKCGVHKCQQLCHSGKCYNCYINSYDDLACPCGKTVIQPPVPCGTKPPMCNHPCTIKRECGHSNEVWEHKCHSGPCPPCTYLVDKMCAGGHQVQKSVKCSTIDASCGRICGKVLSCLSHTCPRICHSGPCLINNNNVNINKQQPLLPANLIASKNNYQLQQQSKLPTTTTTTTTTTSTTSTTSPKIIEKDEELIEDDNNNNNNNNNNNNNNNNNNNNNNNNNNNNNNNNNNNNNNNNNNNNNNNEKAEITNECNHDHDHEHEHSDDENSEEEVDLNECNHNHECNEEEERIKKEEKEDDEDEDELFDSLMGNLTCGYLCGIPLKSCEHTCHQACHPGEPCPTNISCKQKVRIYCKCKRRSVETLCCGKDDTRQLECDEVCEKEEREKQLKEAFYGSHTLDNNPNNPNNPNNPNNNTTTTTTTTTTTTSSPTNFTVLDPTSIDYQPNKLQIEALQLIAKASPKLIKKIEAIYEDFINSNLLKQTIKYTDSIQLFLLVQMAKFYQMKYREKKPLNYIEFFKKTSYQIPSPRLSEMVGINGSSLSSGTISNSLSFSINNGQSYASISLSPSEMVAQAQAQAELENQCPALLFKNLDPSIKTDHLTNLLQEFEGRYKLMWVDDSNCLAIFGDSISFSMASQIKTMFTYEIYQDDPSLIDITFGNSVLSTPTSSSGSNSGVSSPLSYLSPLKKSQDTQFFRVSQQMNKFSFLDTINQNQNQNNNNNNNNNNNNNSNINIKPTIPLYSTSTANANRMLRRSNENTGENVADDWENL.

The segment covering 1–12 has biased composition (polar residues); the sequence is MEESQNIPPKTQ. Disordered regions lie at residues 1-123, 142-164, and 181-282; these read MEES…NNQL, LKSESAKQQQQQQQQSLPTQEPT, and KAFV…KKDI. Low complexity-rich tracts occupy residues 13 to 103 and 110 to 121; these read TLNN…SNSN and HNNNYNNNNNNN. The span at 194–209 shows a compositional bias: low complexity; that stretch reads NNTNNNNNNNNNNNNN. The segment covering 217 to 232 has biased composition (basic and acidic residues); the sequence is DNNRPQRERRERKPKE. Residues 240–252 are compositionally biased toward pro residues; sequence PQQPQQPQQPQPQ. The segment covering 253-263 has biased composition (low complexity); that stretch reads PQQQQQSQQQQ. A compositionally biased stretch (basic and acidic residues) spans 267 to 282; that stretch reads ENNRKKENKLQSKKDI. Residues 363-416 form a PHD-type zinc finger; sequence IYECMVCFENVGKNAVIWSCSQCFTMFHSSCIKQWSSKSVTTEGKWKCPGCRYN. The RING-type; degenerate zinc-finger motif lies at 366–414; that stretch reads CMVCFENVGKNAVIWSCSQCFTMFHSSCIKQWSSKSVTTEGKWKCPGCR. NF-X1-type zinc fingers lie at residues 460 to 478, 515 to 534, 581 to 600, 642 to 661, 739 to 758, 796 to 817, and 852 to 868; these read CPHSCTMLCHPGPCLNCSS, CGNHRCQQQCHSGSCSPCEV, CGNHKCQRTCHKGDCEPCSL, CKQHSCTDRCHTGPCGSCKV, CGVHKCQQLCHSGKCYNCYI, CGHSNEVWEHKCHSGPCPPCTY, and CLSHTCPRICHSGPCLI. 2 disordered regions span residues 897–1012 and 1021–1040; these read QQSK…VDLN and NEEEERIKKEEKEDDEDEDE. A compositionally biased stretch (low complexity) spans 903–921; it reads TTTTTTTTTTSTTSTTSPK. Over residues 925 to 934 the composition is skewed to acidic residues; the sequence is KDEELIEDDN. Low complexity predominate over residues 935-980; sequence NNNNNNNNNNNNNNNNNNNNNNNNNNNNNNNNNNNNNNNNNNNNNN. Composition is skewed to basic and acidic residues over residues 981–1002 and 1021–1031; these read EKAEITNECNHDHDHEHEHSDD and NEEEERIKKEE. An NF-X1-type 8 zinc finger spans residues 1062–1084; the sequence is CEHTCHQACHPGEPCPTNISCKQ. Disordered regions lie at residues 1132–1167 and 1447–1473; these read SHTLDNNPNNPNNPNNPNNNTTTTTTTTTTTTSSPT and NQNQNQNNNNNNNNNNNNNSNINIKPT. Composition is skewed to low complexity over residues 1137 to 1167 and 1447 to 1470; these read NNPNNPNNPNNPNNNTTTTTTTTTTTTSSPT and NQNQNQNNNNNNNNNNNNNSNINI.

The protein belongs to the NFX1 family.

It localises to the nucleus. Functionally, may play a role in transcription regulation. This Dictyostelium discoideum (Social amoeba) protein is Transcriptional repressor NF-X1 homolog (nfx1).